The sequence spans 358 residues: Probable dual-specificity RNA methyltransferase RlmN 2 (358 aa).

The active-site Proton acceptor is E90. Residues 96–328 enclose the Radical SAM core domain; sequence SGIRRTVCVS…VNTCRYTKGD (233 aa). C103 and C334 form a disulfide bridge. [4Fe-4S] cluster contacts are provided by C110, C114, and C117. Residues 160 to 161, S192, 215 to 217, and N291 each bind S-adenosyl-L-methionine; these read GE and SLH. The active-site S-methylcysteine intermediate is the C334.

The protein belongs to the radical SAM superfamily. RlmN family. Requires [4Fe-4S] cluster as cofactor.

It localises to the cytoplasm. The catalysed reaction is adenosine(2503) in 23S rRNA + 2 reduced [2Fe-2S]-[ferredoxin] + 2 S-adenosyl-L-methionine = 2-methyladenosine(2503) in 23S rRNA + 5'-deoxyadenosine + L-methionine + 2 oxidized [2Fe-2S]-[ferredoxin] + S-adenosyl-L-homocysteine. The enzyme catalyses adenosine(37) in tRNA + 2 reduced [2Fe-2S]-[ferredoxin] + 2 S-adenosyl-L-methionine = 2-methyladenosine(37) in tRNA + 5'-deoxyadenosine + L-methionine + 2 oxidized [2Fe-2S]-[ferredoxin] + S-adenosyl-L-homocysteine. Functionally, specifically methylates position 2 of adenine 2503 in 23S rRNA and position 2 of adenine 37 in tRNAs. The chain is Probable dual-specificity RNA methyltransferase RlmN 2 from Protochlamydia amoebophila (strain UWE25).